The primary structure comprises 160 residues: Deoxyuridine 5'-triphosphate nucleotidohydrolase (160 aa).

DUMP is bound by residues Ser80, Gly93, Asp96, Tyr99, Lys104, Arg149, Phe154, and Gly155.

This sequence belongs to the dUTPase family. As to quaternary structure, homotrimer. The cofactor is Mg(2+).

The enzyme catalyses dUTP + H2O = dUMP + diphosphate + H(+). Its pathway is pyrimidine metabolism; dUMP biosynthesis; dUMP from dCTP (dUTP route): step 2/2. Functionally, involved in nucleotide metabolism via production of dUMP, the immediate precursor of thymidine nucleotides, and decreases the intracellular concentration of dUTP so that uracil cannot be incorporated into DNA. This is Deoxyuridine 5'-triphosphate nucleotidohydrolase (DUT1) from Debaryomyces hansenii (strain ATCC 36239 / CBS 767 / BCRC 21394 / JCM 1990 / NBRC 0083 / IGC 2968) (Yeast).